A 522-amino-acid polypeptide reads, in one-letter code: Putative malate dehydrogenase 1B (522 aa).

The disordered stretch occupies residues 495 to 522 (EETEKSSSEDTPEAAAAAVSTGDETVPS).

It belongs to the LDH/MDH superfamily. MDH type 2 family.

This chain is Putative malate dehydrogenase 1B (MDH1B), found in Branchiostoma floridae (Florida lancelet).